The sequence spans 227 residues: Flagellar L-ring protein 2 (227 aa).

The first 17 residues, 1–17, serve as a signal peptide directing secretion; the sequence is MKSKLAITMVSALLLAA. C18 carries the N-palmitoyl cysteine lipid modification. Residue C18 is the site of S-diacylglycerol cysteine attachment.

The protein belongs to the FlgH family. In terms of assembly, the basal body constitutes a major portion of the flagellar organelle and consists of four rings (L,P,S, and M) mounted on a central rod.

The protein resides in the cell outer membrane. Its subcellular location is the bacterial flagellum basal body. In terms of biological role, assembles around the rod to form the L-ring and probably protects the motor/basal body from shearing forces during rotation. The sequence is that of Flagellar L-ring protein 2 from Chromobacterium violaceum (strain ATCC 12472 / DSM 30191 / JCM 1249 / CCUG 213 / NBRC 12614 / NCIMB 9131 / NCTC 9757 / MK).